The primary structure comprises 446 residues: Argininosuccinate synthase (446 aa).

ATP-binding positions include 17 to 25 and Ala-43; that span reads AFSGGLDTS. Tyr-99 lines the L-citrulline pocket. ATP contacts are provided by Gly-129 and Thr-131. The L-aspartate site is built by Thr-131, Asn-135, and Asp-136. Residue Asn-135 coordinates L-citrulline. Position 136 (Asp-136) interacts with ATP. L-citrulline contacts are provided by Arg-139 and Ser-192. Residue Asp-194 participates in ATP binding. Positions 201, 203, and 280 each coordinate L-citrulline.

Belongs to the argininosuccinate synthase family. Type 2 subfamily. As to quaternary structure, homotetramer.

The protein resides in the cytoplasm. It carries out the reaction L-citrulline + L-aspartate + ATP = 2-(N(omega)-L-arginino)succinate + AMP + diphosphate + H(+). Its pathway is amino-acid biosynthesis; L-arginine biosynthesis; L-arginine from L-ornithine and carbamoyl phosphate: step 2/3. The protein is Argininosuccinate synthase of Polaromonas sp. (strain JS666 / ATCC BAA-500).